A 256-amino-acid chain; its full sequence is Protein TV0584 (256 aa).

Belongs to the CinA family.

This chain is Protein TV0584, found in Thermoplasma volcanium (strain ATCC 51530 / DSM 4299 / JCM 9571 / NBRC 15438 / GSS1).